The primary structure comprises 276 residues: Small ribosomal subunit protein uS3 (276 aa).

The KH type-2 domain occupies 39 to 110 (IRRETMKFFK…KINIKIKEIK (72 aa)). The tract at residues 218–243 (DAGQVINRKSSREKSEHFDRSRVDDR) is disordered. A compositionally biased stretch (basic and acidic residues) spans 227 to 243 (SSREKSEHFDRSRVDDR).

It belongs to the universal ribosomal protein uS3 family. As to quaternary structure, part of the 30S ribosomal subunit. Forms a tight complex with proteins S10 and S14.

Binds the lower part of the 30S subunit head. Binds mRNA in the 70S ribosome, positioning it for translation. This is Small ribosomal subunit protein uS3 from Borrelia hermsii (strain HS1 / DAH).